A 357-amino-acid chain; its full sequence is Peptide chain release factor 1 (357 aa).

An N5-methylglutamine modification is found at glutamine 236.

It belongs to the prokaryotic/mitochondrial release factor family. In terms of processing, methylated by PrmC. Methylation increases the termination efficiency of RF1.

The protein resides in the cytoplasm. Its function is as follows. Peptide chain release factor 1 directs the termination of translation in response to the peptide chain termination codons UAG and UAA. The sequence is that of Peptide chain release factor 1 from Mycobacterium avium (strain 104).